The primary structure comprises 264 residues: Thiazole synthase (264 aa).

Lys-106 (schiff-base intermediate with DXP) is an active-site residue. Residues Gly-167, 193–194 (AG), and 215–216 (NS) each bind 1-deoxy-D-xylulose 5-phosphate.

Belongs to the ThiG family. Homotetramer. Forms heterodimers with either ThiH or ThiS.

It localises to the cytoplasm. The enzyme catalyses [ThiS sulfur-carrier protein]-C-terminal-Gly-aminoethanethioate + 2-iminoacetate + 1-deoxy-D-xylulose 5-phosphate = [ThiS sulfur-carrier protein]-C-terminal Gly-Gly + 2-[(2R,5Z)-2-carboxy-4-methylthiazol-5(2H)-ylidene]ethyl phosphate + 2 H2O + H(+). Its pathway is cofactor biosynthesis; thiamine diphosphate biosynthesis. Its function is as follows. Catalyzes the rearrangement of 1-deoxy-D-xylulose 5-phosphate (DXP) to produce the thiazole phosphate moiety of thiamine. Sulfur is provided by the thiocarboxylate moiety of the carrier protein ThiS. In vitro, sulfur can be provided by H(2)S. The sequence is that of Thiazole synthase from Prochlorococcus marinus (strain MIT 9215).